The sequence spans 139 residues: Putative nickel-responsive regulator (139 aa).

Ni(2+) is bound by residues histidine 79, histidine 90, histidine 92, and cysteine 98.

It belongs to the transcriptional regulatory CopG/NikR family. Ni(2+) serves as cofactor.

Functionally, transcriptional regulator. The chain is Putative nickel-responsive regulator from Anaeromyxobacter dehalogenans (strain 2CP-1 / ATCC BAA-258).